A 479-amino-acid polypeptide reads, in one-letter code: NADH-quinone oxidoreductase subunit N 2 (479 aa).

Transmembrane regions (helical) follow at residues 4-24 (FVSFLPELVLLAGALALFVVT), 43-63 (GVLVAALATVNHSAVLFSGAY), 67-87 (AFSQLLKIAIAFGYLCVGILS), 99-119 (PEYFLFLALSMTGLLALVSSI), 121-141 (VITLIIALELSSFPLYLMVAM), 159-179 (IMFGIAANGVMFFGFGYLYGL), 201-221 (AVTGLALTLAGFLYKLAVFPF), 239-259 (LIASLPKLGAVAVLVRFVSLA), 267-287 (ATLLTCLAIASMVYGNLIALV), 294-314 (LLGFSGIAHAGYVMVGFVAMD), 318-338 (FASALYYIAGYMLMVLACFVV), 364-384 (LAVTLIVGVFALAGVPPFVGF), 401-421 (ALVVLTVINSAIAIYYYLQIV), and 444-464 (ALCVLLIVAITLLGVAPAFTI).

This sequence belongs to the complex I subunit 2 family. NDH-1 is composed of 14 different subunits. Subunits NuoA, H, J, K, L, M, N constitute the membrane sector of the complex.

The protein resides in the cell inner membrane. The catalysed reaction is a quinone + NADH + 5 H(+)(in) = a quinol + NAD(+) + 4 H(+)(out). In terms of biological role, NDH-1 shuttles electrons from NADH, via FMN and iron-sulfur (Fe-S) centers, to quinones in the respiratory chain. The immediate electron acceptor for the enzyme in this species is believed to be ubiquinone. Couples the redox reaction to proton translocation (for every two electrons transferred, four hydrogen ions are translocated across the cytoplasmic membrane), and thus conserves the redox energy in a proton gradient. In Opitutus terrae (strain DSM 11246 / JCM 15787 / PB90-1), this protein is NADH-quinone oxidoreductase subunit N 2.